A 314-amino-acid polypeptide reads, in one-letter code: Hydroxyacyl-coenzyme A dehydrogenase, mitochondrial (314 aa).

The transit peptide at 1-12 (MAFVTRQFMRSV) directs the protein to the mitochondrion. NAD(+) is bound by residues 34–39 (GGGLMG) and Asp57. CoA is bound by residues Ser73 and Lys80. Position 80 is an N6-succinyllysine (Lys80). Lys81 and Lys87 each carry N6-acetyllysine; alternate. Lys81 and Lys87 each carry N6-succinyllysine; alternate. An NAD(+)-binding site is contributed by Glu122. At Lys125 the chain carries N6-acetyllysine. Lys127 contacts NAD(+). Lys127 carries the N6-(2-hydroxyisobutyryl)lysine modification. Residue Lys136 is modified to N6-acetyllysine; alternate. Lys136 carries the N6-succinyllysine; alternate modification. The NAD(+) site is built by Ser149 and Asn173. Position 149 (Ser149) interacts with CoA. N6-acetyllysine is present on Lys179. 3 positions are modified to N6-acetyllysine; alternate: Lys185, Lys192, and Lys202. 3 positions are modified to N6-succinyllysine; alternate: Lys185, Lys192, and Lys202. Position 206 is an N6-succinyllysine (Lys206). Lys212 and Lys241 each carry N6-acetyllysine; alternate. 2 positions are modified to N6-succinyllysine; alternate: Lys212 and Lys241. Lys305 contributes to the NAD(+) binding site. Lys312 carries the N6-acetyllysine; alternate modification. Lys312 carries the N6-succinyllysine; alternate modification.

This sequence belongs to the 3-hydroxyacyl-CoA dehydrogenase family. In terms of assembly, homodimer. Interacts with GLUD1; this interaction inhibits the activation of glutamate dehydrogenase 1 (GLUD1). Post-translationally, succinylation at Lys-81, adjacent to a coenzyme A binding site. Desuccinylated by SIRT5. Expressed in liver, kidney, pancreas, heart and skeletal muscle.

It localises to the mitochondrion matrix. The catalysed reaction is a (3S)-3-hydroxyacyl-CoA + NAD(+) = a 3-oxoacyl-CoA + NADH + H(+). It catalyses the reaction (3S)-3-hydroxybutanoyl-CoA + NAD(+) = acetoacetyl-CoA + NADH + H(+). The enzyme catalyses (3S)-hydroxydecanoyl-CoA + NAD(+) = 3-oxodecanoyl-CoA + NADH + H(+). It carries out the reaction (3S)-hydroxyhexadecanoyl-CoA + NAD(+) = 3-oxohexadecanoyl-CoA + NADH + H(+). It participates in lipid metabolism; fatty acid beta-oxidation. Its function is as follows. Mitochondrial fatty acid beta-oxidation enzyme that catalyzes the third step of the beta-oxidation cycle for medium and short-chain 3-hydroxy fatty acyl-CoAs (C4 to C10). Plays a role in the control of insulin secretion by inhibiting the activation of glutamate dehydrogenase 1 (GLUD1), an enzyme that has an important role in regulating amino acid-induced insulin secretion. Plays a role in the maintenance of normal spermatogenesis through the reduction of fatty acid accumulation in the testes. The polypeptide is Hydroxyacyl-coenzyme A dehydrogenase, mitochondrial (HADH) (Homo sapiens (Human)).